A 359-amino-acid chain; its full sequence is DNA polymerase IV (359 aa).

In terms of domain architecture, UmuC spans 4 to 185 (IIHVDMDCFF…LALIKIPGVG (182 aa)). Mg(2+) is bound by residues aspartate 8 and aspartate 103. Residue glutamate 104 is part of the active site.

This sequence belongs to the DNA polymerase type-Y family. Monomer. Mg(2+) serves as cofactor.

It localises to the cytoplasm. The enzyme catalyses DNA(n) + a 2'-deoxyribonucleoside 5'-triphosphate = DNA(n+1) + diphosphate. Functionally, poorly processive, error-prone DNA polymerase involved in untargeted mutagenesis. Copies undamaged DNA at stalled replication forks, which arise in vivo from mismatched or misaligned primer ends. These misaligned primers can be extended by PolIV. Exhibits no 3'-5' exonuclease (proofreading) activity. May be involved in translesional synthesis, in conjunction with the beta clamp from PolIII. In Shewanella loihica (strain ATCC BAA-1088 / PV-4), this protein is DNA polymerase IV.